Consider the following 473-residue polypeptide: Photosystem II CP43 reaction center protein (473 aa).

Residues 1–14 (MKTLYSLRRFYHVE) constitute a propeptide that is removed on maturation. T15 bears the N-acetylthreonine mark. T15 is subject to Phosphothreonine. The next 5 membrane-spanning stretches (helical) occupy residues 69–93 (LFEV…PHLA), 134–155 (LLGP…KDRN), 178–200 (KALY…RKIT), 255–275 (KPFA…LSYS), and 291–312 (WFNN…ASQA). E367 is a binding site for [CaMn4O5] cluster. Residues 447–471 (RARAAAAGFEKGIDRDFEPVLSMTP) traverse the membrane as a helical segment.

Belongs to the PsbB/PsbC family. PsbC subfamily. As to quaternary structure, PSII is composed of 1 copy each of membrane proteins PsbA, PsbB, PsbC, PsbD, PsbE, PsbF, PsbH, PsbI, PsbJ, PsbK, PsbL, PsbM, PsbT, PsbX, PsbY, PsbZ, Psb30/Ycf12, at least 3 peripheral proteins of the oxygen-evolving complex and a large number of cofactors. It forms dimeric complexes. Binds multiple chlorophylls and provides some of the ligands for the Ca-4Mn-5O cluster of the oxygen-evolving complex. It may also provide a ligand for a Cl- that is required for oxygen evolution. PSII binds additional chlorophylls, carotenoids and specific lipids. serves as cofactor.

It is found in the plastid. The protein resides in the chloroplast thylakoid membrane. In terms of biological role, one of the components of the core complex of photosystem II (PSII). It binds chlorophyll and helps catalyze the primary light-induced photochemical processes of PSII. PSII is a light-driven water:plastoquinone oxidoreductase, using light energy to abstract electrons from H(2)O, generating O(2) and a proton gradient subsequently used for ATP formation. In Nicotiana tabacum (Common tobacco), this protein is Photosystem II CP43 reaction center protein.